The primary structure comprises 263 residues: MRIFRPWRLRCPALHLPSLSVFSLRWKLPSLTTDETMCKSVTTDEWKKVFYEKMEEAKPADSWDLIIDPNLKHNVLSPGWKQYLELHASGRFHCSWCWHTWQSPYVVILFHMFLDRAQRAGSVRMRVFKQLCYECGTARLDESSMLEENIEGLVDNLITSLREQCYGERGGQYRIHVASRQDNRRHRGEFCEACQEGIVHWKPSEKLLEEEATTYTFSRAPSPTKSQDQTGSGWNFCSIPWCLFWATVLLLIIYLQFSFRSSV.

Residues 1-238 (MRIFRPWRLR…QTGSGWNFCS (238 aa)) are Cytoplasmic-facing. The 3CxxC-type zinc-finger motif lies at 88 to 197 (ASGRFHCSWC…GEFCEACQEG (110 aa)). Residues 239-259 (IPWCLFWATVLLLIIYLQFSF) traverse the membrane as a helical segment. Over 260 to 263 (RSSV) the chain is Extracellular.

Belongs to the TMEM7 family. In terms of assembly, interacts with olfactory receptors. As to expression, expressed in testis.

It localises to the cell membrane. Functionally, specifically promotes functional cell surface expression of olfactory receptors, but not of other GPCRs. The polypeptide is Receptor-transporting protein 1 (RTP1) (Homo sapiens (Human)).